The following is a 125-amino-acid chain: Small ribosomal subunit protein uS12c (125 aa).

It belongs to the universal ribosomal protein uS12 family. As to quaternary structure, part of the 30S ribosomal subunit.

It localises to the plastid. In terms of biological role, with S4 and S5 plays an important role in translational accuracy. Located at the interface of the 30S and 50S subunits. The polypeptide is Small ribosomal subunit protein uS12c (rps12) (Euglena longa (Euglenophycean alga)).